The sequence spans 268 residues: MADEINEIREEQEQLAPFDPSKKKKKKKVVIQEPVEDLAESSQTEKSDSLPVNDGLESSFTGMKKKKKKPTESSLLNNESVDAGEDLDEIANDEQEGEEGIVLQQRYPWEGSERDYIYDELLGRVFNILRENNPELAGDRRRTVMRPPQVLREGTKKTVFVNFMDLCKTMHRQPDHVMQYLLAELGTSGSLDGQQRLVVKGRFAPKNFEGILRRYITDYVICLGCKSPDTILSKENRLFFLRCEKCGSQRSVAPIKTGFVARVSRRKT.

The span at 1 to 12 (MADEINEIREEQ) shows a compositional bias: basic and acidic residues. The disordered stretch occupies residues 1–85 (MADEINEIRE…LNNESVDAGE (85 aa)). Ala2 carries the N-acetylalanine modification. 3 positions are modified to phosphoserine; by CK2: Ser42, Ser80, and Ser112. The segment at 222-246 (CLGCKSPDTILSKENRLFFLRCEKC) adopts a C4-type zinc-finger fold.

The protein belongs to the eIF-2-beta/eIF-5 family. As to quaternary structure, eukaryotic translation initiation factor 2 eIF2 is a heterotrimeric complex composed of an alpha, a beta and a gamma subunit. Phosphorylated at Ser-42, Ser-80 and Ser-112 by CK2.

The protein localises to the cytoplasm. It localises to the cytosol. Component of the eIF2 complex that functions in the early steps of protein synthesis by forming a ternary complex with GTP and initiator tRNA. This complex binds to a 40S ribosomal subunit, followed by mRNA binding to form a 43S pre-initiation complex (43S PIC). Junction of the 60S ribosomal subunit to form the 80S initiation complex is preceded by hydrolysis of the GTP bound to eIF2 and release of an eIF2-GDP binary complex. In order for eIF2 to recycle and catalyze another round of initiation, the GDP bound to eIF2 must exchange with GTP by way of a reaction catalyzed by eIF2B. This Arabidopsis thaliana (Mouse-ear cress) protein is Eukaryotic translation initiation factor 2 subunit beta.